Reading from the N-terminus, the 157-residue chain is MIVLGIDPALGSLGWAVVARQLTKLKYLASGIIKTNSKDEIHNRLACINSTLEKVILEYQPNMAAIEETFVNTNSVTSLKLGYARGAIMSLCGRYNLDIREFKPNTVKKTVTGYGHAEKDQILHMIKLLLPGTSLITNSDEADAIAIAYTCHVMRVK.

Active-site residues include Asp-7, Glu-67, and Asp-140. Residues Asp-7, Glu-67, and Asp-140 each contribute to the Mg(2+) site.

The protein belongs to the RuvC family. As to quaternary structure, homodimer which binds Holliday junction (HJ) DNA. The HJ becomes 2-fold symmetrical on binding to RuvC with unstacked arms; it has a different conformation from HJ DNA in complex with RuvA. In the full resolvosome a probable DNA-RuvA(4)-RuvB(12)-RuvC(2) complex forms which resolves the HJ. It depends on Mg(2+) as a cofactor.

It is found in the cytoplasm. The enzyme catalyses Endonucleolytic cleavage at a junction such as a reciprocal single-stranded crossover between two homologous DNA duplexes (Holliday junction).. Its function is as follows. The RuvA-RuvB-RuvC complex processes Holliday junction (HJ) DNA during genetic recombination and DNA repair. Endonuclease that resolves HJ intermediates. Cleaves cruciform DNA by making single-stranded nicks across the HJ at symmetrical positions within the homologous arms, yielding a 5'-phosphate and a 3'-hydroxyl group; requires a central core of homology in the junction. The consensus cleavage sequence is 5'-(A/T)TT(C/G)-3'. Cleavage occurs on the 3'-side of the TT dinucleotide at the point of strand exchange. HJ branch migration catalyzed by RuvA-RuvB allows RuvC to scan DNA until it finds its consensus sequence, where it cleaves and resolves the cruciform DNA. The protein is Crossover junction endodeoxyribonuclease RuvC of Rickettsia akari (strain Hartford).